Consider the following 250-residue polypeptide: Flavin-dependent thymidylate synthase (250 aa).

In terms of domain architecture, ThyX spans 7–233 (LRVQLIAKTE…PQVFSDFEIV (227 aa)). FAD-binding positions include Ser-71, 95–97 (RHR), and Gln-103. DUMP-binding positions include 92–95 (ELIR), 103–107 (QLSQR), and Arg-172. The short motif at 95–105 (RHRHFSYSQLS) is the ThyX motif element. FAD contacts are provided by residues 188–190 (NYR) and His-194. Arg-199 serves as a coordination point for dUMP. Arg-199 (involved in ionization of N3 of dUMP, leading to its activation) is an active-site residue.

This sequence belongs to the thymidylate synthase ThyX family. Homotetramer. FAD serves as cofactor.

It carries out the reaction dUMP + (6R)-5,10-methylene-5,6,7,8-tetrahydrofolate + NADPH + H(+) = dTMP + (6S)-5,6,7,8-tetrahydrofolate + NADP(+). It functions in the pathway pyrimidine metabolism; dTTP biosynthesis. Functionally, catalyzes the reductive methylation of 2'-deoxyuridine-5'-monophosphate (dUMP) to 2'-deoxythymidine-5'-monophosphate (dTMP) while utilizing 5,10-methylenetetrahydrofolate (mTHF) as the methyl donor, and NADPH and FADH(2) as the reductant. The protein is Flavin-dependent thymidylate synthase of Mycolicibacterium vanbaalenii (strain DSM 7251 / JCM 13017 / BCRC 16820 / KCTC 9966 / NRRL B-24157 / PYR-1) (Mycobacterium vanbaalenii).